The following is a 408-amino-acid chain: Putative gustatory receptor 98c (408 aa).

At 1–42 (MEMEAKRSRLLTTARPYLQVLSLFGLTPPAEFFTRTLRKRRR) the chain is on the cytoplasmic side. The helical transmembrane segment at 43–63 (FCWMAGYSLYLIAILLMVFYE) threads the bilayer. Over 64–92 (FHANIVSLHLEIYKFHVEDFSKVMGRTQK) the chain is Extracellular. Residues 93 to 113 (FLIVAIATCNQLNILLNYGRL) traverse the membrane as a helical segment. Topologically, residues 114-146 (GLIYDEIANLDLGIDKSSKNFCGKSHWWSFRLR) are cytoplasmic. Residues 147–167 (LTLSIGLWMVIIIGVIPRLTL) form a helical membrane-spanning segment. Residues 168–183 (GRAGPFFHWVNQVLTQ) are Extracellular-facing. The helical transmembrane segment at 184 to 204 (IILIMLQLKGPEYCLFVLLVY) threads the bilayer. Topologically, residues 205 to 261 (ELILRTRHVLEQLKDDLEDFDCGARIQELCVTLKQNQLLIGRIWRLVDEIGAYFRWS) are cytoplasmic. A helical membrane pass occupies residues 262–282 (MTLLFLYNGLTILHVVNWAII). Residues 283–296 (RSIDPNDCCQLNRL) lie on the Extracellular side of the membrane. The chain crosses the membrane as a helical span at residues 297–317 (GSITFLSFNLLLTCFFSECCV). The Cytoplasmic portion of the chain corresponds to 318–367 (KTYNSISYILHQIGCLPTAEEFQMLKMGLKEYILQMQHLKLLFTCGGLFD). The helical transmembrane segment at 368 to 388 (INIKLFGGMLVTLCGYVIIIV) threads the bilayer. Residues 389-408 (QFKIQDFALIGYRQNTSDTS) lie on the Extracellular side of the membrane. N-linked (GlcNAc...) asparagine glycosylation is present at N403.

The protein belongs to the insect chemoreceptor superfamily. Gustatory receptor (GR) family. Gr2a subfamily.

It is found in the cell membrane. Probable gustatory receptor which mediates acceptance or avoidance behavior, depending on its substrates. In Drosophila melanogaster (Fruit fly), this protein is Putative gustatory receptor 98c (Gr98c).